The sequence spans 502 residues: Cardiolipin synthase (502 aa).

3 helical membrane passes run 7 to 27 (VIIF…YWEG), 29 to 49 (LLGG…FVIS), and 59 to 79 (ITWL…YLMF). PLD phosphodiesterase domains follow at residues 237–264 (INFR…GDEY) and 415–442 (SKGF…DMRS). Residues His242, Lys244, Asp249, His420, Lys422, and Asp427 contribute to the active site.

The protein belongs to the phospholipase D family. Cardiolipin synthase subfamily.

It localises to the cell membrane. It catalyses the reaction 2 a 1,2-diacyl-sn-glycero-3-phospho-(1'-sn-glycerol) = a cardiolipin + glycerol. In terms of biological role, catalyzes the reversible phosphatidyl group transfer from one phosphatidylglycerol molecule to another to form cardiolipin (CL) (diphosphatidylglycerol) and glycerol. In Geobacillus sp. (strain WCH70), this protein is Cardiolipin synthase (cls).